The chain runs to 347 residues: MWNPKKKSEALAKFKSFPYPKPGTSNVLDSKEGDTRRKYFTKTHLHRLFVFVVLLLCSGYFLKHTLLTRPKESNVVMIFVNNIGGGVLDVKSPRQWELEKISTENKKKYAERHGYHFFVKSTGLKRRYAHEWRESWEKADYIMEAMKKYPHAEWFWWVDLTTFIMEPQYSLEKLIINRLDHIATRNITDSMEFNPKNFHEIPFVDYSEDINFILGQDCNGFSLGSFLVRRSDWTSRLMDFLWDPVVYGQKHMDWPHDEQNAIEYFYENNAWLRSGMGFVPLRLFNSYPPGACAGEGENPRFFYNQKEGDFLVNLAGCNYGRDCLDEINHYKGLAQRKRGWRKLVPFL.

Topologically, residues 1 to 44 (MWNPKKKSEALAKFKSFPYPKPGTSNVLDSKEGDTRRKYFTKTH) are cytoplasmic. The chain crosses the membrane as a helical; Signal-anchor for type II membrane protein span at residues 45–62 (LHRLFVFVVLLLCSGYFL). The Lumenal portion of the chain corresponds to 63–347 (KHTLLTRPKE…RGWRKLVPFL (285 aa)).

Belongs to the glycosyltransferase 34 family.

The protein resides in the endoplasmic reticulum membrane. This is an uncharacterized protein from Schizosaccharomyces pombe (strain 972 / ATCC 24843) (Fission yeast).